The sequence spans 452 residues: MKSLLRQIPQISKVVEIFKKKYPEIYVVKAAREVAEKYRKEIIEGKRKDLNGFLEDVERKIKSLMKPNIKRVINATGVVINTNLGRAPLSKDVINFISEIANGYSNLEYNLEEGKRGSRIAHIEKYLNELTGAESSFVVNNNAGAVFLVLNTLAEGKEVIISRGELVEIGGSFRIPDIMKKSGAILREVGTTNKTKVSDYEGAINQNTALLMKVHKSNFYMEGFVEEVKLEDLVKLGHKYGIPTYYDAGSGLLINLKEFGISVDEPNFRDCISLGIDLVSGSGDKLLGGPQAGIIVGKKNLIEKIKKNPIARALRIDKLTLSGLEMTLKLYFEKRYEDIPVIRMLTQDEKALRQKAKRLEKLLKDIPGLKISVIKDKAKPGGGSLPELELPTYCVAIRHDRLSSQELSRRLRLAEPPIVCRIREDQLLFDMRTVFHEDLKTIKKTLQELLSI.

At K285 the chain carries N6-(pyridoxal phosphate)lysine.

This sequence belongs to the SelA family. It depends on pyridoxal 5'-phosphate as a cofactor.

Its subcellular location is the cytoplasm. It catalyses the reaction L-seryl-tRNA(Sec) + selenophosphate + H(+) = L-selenocysteinyl-tRNA(Sec) + phosphate. Its pathway is aminoacyl-tRNA biosynthesis; selenocysteinyl-tRNA(Sec) biosynthesis; selenocysteinyl-tRNA(Sec) from L-seryl-tRNA(Sec) (bacterial route): step 1/1. Functionally, converts seryl-tRNA(Sec) to selenocysteinyl-tRNA(Sec) required for selenoprotein biosynthesis. The protein is L-seryl-tRNA(Sec) selenium transferase of Aquifex aeolicus (strain VF5).